A 279-amino-acid chain; its full sequence is uncharacterized protein (279 aa).

Residues 233-279 (NDHQLHDSPLCSDVSDSTSNNNYDESLNFSNDNNNSSFNDFDDDNFI) are disordered. Over residues 246-259 (VSDSTSNNNYDESL) the composition is skewed to polar residues. Positions 260–271 (NFSNDNNNSSFN) are enriched in low complexity.

This is an uncharacterized protein from Buchnera aphidicola subsp. Baizongia pistaciae (strain Bp).